Here is a 198-residue protein sequence, read N- to C-terminus: Recombination protein RecR (198 aa).

The C4-type zinc-finger motif lies at 57–72; that stretch reads CDKCNTFTEAQICEVC. The Toprim domain maps to 80–175; it reads TLLCVVETPA…AVTRLARGVP (96 aa).

Belongs to the RecR family.

Its function is as follows. May play a role in DNA repair. It seems to be involved in an RecBC-independent recombinational process of DNA repair. It may act with RecF and RecO. The sequence is that of Recombination protein RecR from Burkholderia multivorans (strain ATCC 17616 / 249).